Reading from the N-terminus, the 309-residue chain is uncharacterized protein (309 aa).

The protein belongs to the OprB family.

This is an uncharacterized protein from Aquifex aeolicus (strain VF5).